Reading from the N-terminus, the 518-residue chain is MSEAEKTDVLLVGAGIMSATLCALLRLLEPNWSMTLVERLDGAAAESSDPWNNAGTGHSALCELNYTPARPDGSIDIAKAVNVNEQFQVSRQFWTYAVENGVLPDVRSFLNPIPHVSFVTGADNVQYLRKRYEALVGNPLFGTMEFIDDAGEFARRLPLMAEGRDLREPVGLNWTQDGTDVDFGALSRQLLGFGAQQGMDTLFGHDVTNLSQNSDSTWTVKVVNRRTGRKRTFNAKFVFVGAGGGALPLLQKAGIKEAKGFGGFPVGGQWLRTGNPELTAKHQAKVYGLPPLGAPPMSVPHLDTRVINDKSWLLFGPFAGWSPKFLKQGKVTDLPFSVKPDNLVSMLGVGLTEMGLLKYLIGQLLLSEAARVENLREFAPSAKDSDWELDIAGQRVQVIRKAKGKGGVLEFGTTVLSAADGSIAGLLGASPGASTAVPAMFDVMKRCFADRYPSWEPKLKEMVPSLGVTLSDEPKLFEEVWARGTKVLKLDKPAGAIPATTDGQSTAGTEHTPTAATV.

The disordered stretch occupies residues 495–518 (GAIPATTDGQSTAGTEHTPTAATV). Polar residues predominate over residues 501 to 518 (TDGQSTAGTEHTPTAATV).

This sequence belongs to the MQO family. The cofactor is FAD.

The catalysed reaction is (S)-malate + a quinone = a quinol + oxaloacetate. The protein operates within carbohydrate metabolism; tricarboxylic acid cycle; oxaloacetate from (S)-malate (quinone route): step 1/1. The protein is Probable malate:quinone oxidoreductase of Mycolicibacterium gilvum (strain PYR-GCK) (Mycobacterium gilvum (strain PYR-GCK)).